The chain runs to 272 residues: Imidazole glycerol phosphate synthase subunit HisF (272 aa).

Catalysis depends on residues Asp11 and Asp130.

It belongs to the HisA/HisF family. Heterodimer of HisH and HisF.

The protein localises to the cytoplasm. It carries out the reaction 5-[(5-phospho-1-deoxy-D-ribulos-1-ylimino)methylamino]-1-(5-phospho-beta-D-ribosyl)imidazole-4-carboxamide + L-glutamine = D-erythro-1-(imidazol-4-yl)glycerol 3-phosphate + 5-amino-1-(5-phospho-beta-D-ribosyl)imidazole-4-carboxamide + L-glutamate + H(+). It participates in amino-acid biosynthesis; L-histidine biosynthesis; L-histidine from 5-phospho-alpha-D-ribose 1-diphosphate: step 5/9. In terms of biological role, IGPS catalyzes the conversion of PRFAR and glutamine to IGP, AICAR and glutamate. The HisF subunit catalyzes the cyclization activity that produces IGP and AICAR from PRFAR using the ammonia provided by the HisH subunit. The protein is Imidazole glycerol phosphate synthase subunit HisF of Methanococcus maripaludis (strain C6 / ATCC BAA-1332).